Here is a 227-residue protein sequence, read N- to C-terminus: UPF0758 protein PG_0894 (227 aa).

In terms of domain architecture, MPN spans Ser104–Leu227. Residues His175, His177, and Asp188 each contribute to the Zn(2+) site. Positions His175 to Asp188 match the JAMM motif motif.

It belongs to the UPF0758 family.

The protein is UPF0758 protein PG_0894 of Porphyromonas gingivalis (strain ATCC BAA-308 / W83).